We begin with the raw amino-acid sequence, 245 residues long: Protein ARV 1 (245 aa).

5 consecutive transmembrane segments (helical) span residues 70-90 (INPA…AYLL), 117-137 (IKVL…FAIA), 163-183 (IFLL…FVDI), 200-220 (TMTR…LVGQ), and 224-244 (PTIF…FFRI).

This sequence belongs to the ARV1 family. Restricted to tissues in which cells are actively dividing or expanding. Mostly expressed in roots and flowers, and, to a lower extent, in stems and leaves.

The protein resides in the endoplasmic reticulum membrane. Functionally, mediator of sterol homeostasis involved in sterol uptake, trafficking and distribution into membranes. Also regulates the sphingolipid metabolism. This is Protein ARV 1 from Arabidopsis thaliana (Mouse-ear cress).